Reading from the N-terminus, the 476-residue chain is 8-amino-7-oxononanoate synthase (476 aa).

Residue arginine 24 coordinates substrate. 171–172 (GF) serves as a coordination point for pyridoxal 5'-phosphate. Histidine 210 contacts substrate. Pyridoxal 5'-phosphate contacts are provided by residues serine 260, 285-288 (DDAH), and 316-319 (TLSK). An N6-(pyridoxal phosphate)lysine modification is found at lysine 319. Position 427 (threonine 427) interacts with substrate. The short motif at 474 to 476 (PKL) is the Peroxisomal targeting signal PTS1 element.

This sequence belongs to the class-II pyridoxal-phosphate-dependent aminotransferase family. BioF subfamily. As to quaternary structure, monomer. Pyridoxal 5'-phosphate serves as cofactor.

It localises to the cytoplasm. The protein resides in the cytosol. It is found in the peroxisome. The enzyme catalyses 6-carboxyhexanoyl-[ACP] + L-alanine + H(+) = (8S)-8-amino-7-oxononanoate + holo-[ACP] + CO2. It participates in cofactor biosynthesis; biotin biosynthesis; 8-amino-7-oxononanoate from pimeloyl-CoA: step 1/1. Its function is as follows. Catalyzes the decarboxylative condensation of pimeloyl-[acyl-carrier protein] and L-alanine to produce 8-amino-7-oxononanoate (AON), [acyl-carrier protein], and carbon dioxide. Required for the biosynthesis of D-biotin that prevents light-mediated cell death and modulates defense gene expression, probably by avoiding hydrogen peroxide H(2)O(2) accumulation. The chain is 8-amino-7-oxononanoate synthase from Arabidopsis thaliana (Mouse-ear cress).